The sequence spans 303 residues: 5-dehydro-4-deoxyglucarate dehydratase (303 aa).

This sequence belongs to the DapA family.

The enzyme catalyses 5-dehydro-4-deoxy-D-glucarate + H(+) = 2,5-dioxopentanoate + CO2 + H2O. It functions in the pathway carbohydrate acid metabolism; D-glucarate degradation; 2,5-dioxopentanoate from D-glucarate: step 2/2. In Pseudomonas putida (Arthrobacter siderocapsulatus), this protein is 5-dehydro-4-deoxyglucarate dehydratase.